The following is a 552-amino-acid chain: Non-structural protein NS1 (552 aa).

This sequence belongs to the orbivirus non-structural protein NS1 family.

The protein is Non-structural protein NS1 (Segment-5) of Antilocapra americana (Pronghorn).